The primary structure comprises 100 residues: Protein RADIALIS-like 1 (100 aa).

The region spanning 9-64 (QSSGSWTAKQNKAFEQALATYDQDTPNRWQNVAKVVGGKTTEEVKRHYELLVQDIN) is the SANT domain. The tract at residues 73–100 (FPNYRTSGGCTNGRLSQEEKRMRNMRLQ) is disordered. A compositionally biased stretch (polar residues) spans 76-87 (YRTSGGCTNGRL).

Its subcellular location is the nucleus. Functionally, probable transcription factor. The polypeptide is Protein RADIALIS-like 1 (RL1) (Arabidopsis thaliana (Mouse-ear cress)).